The chain runs to 459 residues: F-box protein At1g47340 (459 aa).

Residues 31–76 (FMVSVSLPKELILEILKRLPAKSVKRFHCVSKQWASMLSCPHFREL) enclose the F-box domain. The interval 434-459 (AKIEWEEEEEEDEDEDQEKEEEDQWS) is disordered. The span at 438 to 459 (WEEEEEEDEDEDQEKEEEDQWS) shows a compositional bias: acidic residues.

The chain is F-box protein At1g47340 from Arabidopsis thaliana (Mouse-ear cress).